We begin with the raw amino-acid sequence, 167 residues long: Gem-associated protein 6 (167 aa).

Residues 7-74 (KGPLEWQDYI…VQTVETMNEG (68 aa)) enclose the Sm domain. The 99-residue stretch at 69–167 (ETMNEGDHRV…LIEGHLTASQ (99 aa)) folds into the AD domain. Phosphoserine is present on residues Ser-95 and Ser-166.

In terms of assembly, part of the core SMN complex that contains SMN1, GEMIN2/SIP1, DDX20/GEMIN3, GEMIN4, GEMIN5, GEMIN6, GEMIN7, GEMIN8 and STRAP/UNRIP. Part of the SMN-Sm complex that contains SMN1, GEMIN2/SIP1, DDX20/GEMIN3, GEMIN4, GEMIN5, GEMIN6, GEMIN7, GEMIN8, STRAP/UNRIP and the Sm proteins SNRPB, SNRPD1, SNRPD2, SNRPD3, SNRPE, SNRPF and SNRPG. Interacts with GEMIN7; the interaction is direct. Interacts with GEMIN8; the interaction is direct. Interacts with SNRPB, SNRPD2, SNRPD3 and SNRPE; the interaction is direct.

Its subcellular location is the nucleus. It is found in the nucleoplasm. The protein resides in the gem. It localises to the cytoplasm. The SMN complex catalyzes the assembly of small nuclear ribonucleoproteins (snRNPs), the building blocks of the spliceosome, and thereby plays an important role in the splicing of cellular pre-mRNAs. Most spliceosomal snRNPs contain a common set of Sm proteins SNRPB, SNRPD1, SNRPD2, SNRPD3, SNRPE, SNRPF and SNRPG that assemble in a heptameric protein ring on the Sm site of the small nuclear RNA to form the core snRNP (Sm core). In the cytosol, the Sm proteins SNRPD1, SNRPD2, SNRPE, SNRPF and SNRPG are trapped in an inactive 6S pICln-Sm complex by the chaperone CLNS1A that controls the assembly of the core snRNP. To assemble core snRNPs, the SMN complex accepts the trapped 5Sm proteins from CLNS1A forming an intermediate. Binding of snRNA inside 5Sm triggers eviction of the SMN complex, thereby allowing binding of SNRPD3 and SNRPB to complete assembly of the core snRNP. The polypeptide is Gem-associated protein 6 (GEMIN6) (Homo sapiens (Human)).